Reading from the N-terminus, the 447-residue chain is ATP-dependent protease ATPase subunit HslU (447 aa).

Residues Ile-18, 60–65, Asp-259, Glu-325, and Arg-397 each bind ATP; that span reads GVGKTE.

It belongs to the ClpX chaperone family. HslU subfamily. In terms of assembly, a double ring-shaped homohexamer of HslV is capped on each side by a ring-shaped HslU homohexamer. The assembly of the HslU/HslV complex is dependent on binding of ATP.

It is found in the cytoplasm. In terms of biological role, ATPase subunit of a proteasome-like degradation complex; this subunit has chaperone activity. The binding of ATP and its subsequent hydrolysis by HslU are essential for unfolding of protein substrates subsequently hydrolyzed by HslV. HslU recognizes the N-terminal part of its protein substrates and unfolds these before they are guided to HslV for hydrolysis. This chain is ATP-dependent protease ATPase subunit HslU, found in Burkholderia thailandensis (strain ATCC 700388 / DSM 13276 / CCUG 48851 / CIP 106301 / E264).